Reading from the N-terminus, the 471-residue chain is Putative multidrug resistance protein MdtD (471 aa).

Over 1–11 (MTDLPDSTRWQ) the chain is Periplasmic. A helical membrane pass occupies residues 12–32 (LWIVAFGFFMQSLDTTIVNTA). The Cytoplasmic segment spans residues 33–48 (LPSMAQSLGESPLHMH). The chain crosses the membrane as a helical span at residues 49–69 (MVIVSYVLTVAVMLPASGWLA). At 70-76 (DKVGVRN) the chain is on the periplasmic side. Residues 77-97 (IFFTAIVLFTLGSLFCALSGT) form a helical membrane-spanning segment. Residues 98–101 (LNEL) are Cytoplasmic-facing. The helical transmembrane segment at 102 to 124 (LLARALQGVGGAMMVPVGRLTVM) threads the bilayer. The Periplasmic segment spans residues 125-137 (KIVPREQYMAAMT). The chain crosses the membrane as a helical span at residues 138–158 (FVTLPGQVGPLLGPALGGLLV). The Cytoplasmic portion of the chain corresponds to 159–164 (EYASWH). Residues 165-185 (WIFLINIPVGIIGAIATLMLM) form a helical membrane-spanning segment. Residues 186–196 (PNYTMQTRRFD) are Periplasmic-facing. A helical transmembrane segment spans residues 197-217 (LSGFLLLAVGMAVLTLALDGS). At 218 to 224 (KGTGFSP) the chain is on the cytoplasmic side. Residues 225–245 (LAIAGLVAVGVVALVLYLLHA) traverse the membrane as a helical segment. Residues 246–262 (QNNNRALFSLKLFRTRN) are Periplasmic-facing. A helical membrane pass occupies residues 263-283 (FSLGLAGSFAGRIGSGMLPFM). Residues 284–285 (TP) lie on the Cytoplasmic side of the membrane. The chain crosses the membrane as a helical span at residues 286–306 (VFLQIGLGFSPFHAGLMMIPM). Over 307 to 341 (VLGSMGMKRIVVQVVNRFGYRRVLVATTLGLSLVT) the chain is Periplasmic. Residues 342-362 (LLFMTTALLGWYYVLPFVLFL) traverse the membrane as a helical segment. The Cytoplasmic portion of the chain corresponds to 363-395 (QGMVNSTRFSSMNTLTLKDLPDNLASSGNSLLS). Residues 396-416 (MIMQLSMSIGVTIAGLLLGLF) form a helical membrane-spanning segment. Over 417–430 (GSQHVSVDSGTTQT) the chain is Periplasmic. Residues 431–451 (VFMYTWLSMAFIIALPAFVFA) form a helical membrane-spanning segment. Residues 452–471 (RVPSDTHQNVAISRRKRSAQ) lie on the Cytoplasmic side of the membrane.

The protein belongs to the major facilitator superfamily. TCR/Tet family.

The protein localises to the cell inner membrane. This Escherichia coli O1:K1 / APEC protein is Putative multidrug resistance protein MdtD.